A 29-amino-acid chain; its full sequence is Dermaseptin-1.2TR (29 aa).

V29 carries the post-translational modification Valine amide.

As to expression, expressed by the skin glands.

The protein localises to the secreted. Functionally, has antimicrobial activity. The protein is Dermaseptin-1.2TR of Phyllomedusa trinitatis (Trinidad leaf frog).